We begin with the raw amino-acid sequence, 109 residues long: Nucleoid-associated protein A1S_1684 (109 aa).

The protein belongs to the YbaB/EbfC family. As to quaternary structure, homodimer.

The protein localises to the cytoplasm. It is found in the nucleoid. In terms of biological role, binds to DNA and alters its conformation. May be involved in regulation of gene expression, nucleoid organization and DNA protection. This Acinetobacter baumannii (strain ATCC 17978 / DSM 105126 / CIP 53.77 / LMG 1025 / NCDC KC755 / 5377) protein is Nucleoid-associated protein A1S_1684.